Here is a 153-residue protein sequence, read N- to C-terminus: Sec-independent protein translocase protein TatB (153 aa).

The chain crosses the membrane as a helical span at residues 1-21 (MFGISFSELLLVGLVALLVLG). Residues 78–153 (MFAQNQHPET…HDSSLPPRAP (76 aa)) are disordered.

It belongs to the TatB family. The Tat system comprises two distinct complexes: a TatABC complex, containing multiple copies of TatA, TatB and TatC subunits, and a separate TatA complex, containing only TatA subunits. Substrates initially bind to the TatABC complex, which probably triggers association of the separate TatA complex to form the active translocon.

The protein resides in the cell inner membrane. Functionally, part of the twin-arginine translocation (Tat) system that transports large folded proteins containing a characteristic twin-arginine motif in their signal peptide across membranes. Together with TatC, TatB is part of a receptor directly interacting with Tat signal peptides. TatB may form an oligomeric binding site that transiently accommodates folded Tat precursor proteins before their translocation. The sequence is that of Sec-independent protein translocase protein TatB from Pseudomonas savastanoi pv. phaseolicola (strain 1448A / Race 6) (Pseudomonas syringae pv. phaseolicola (strain 1448A / Race 6)).